The sequence spans 366 residues: Pyrimidine monooxygenase RutA (366 aa).

Residues 49-50, asparagine 115, glutamate 124, 140-141, and serine 190 each bind FMN; these read IK and RY.

The protein belongs to the NtaA/SnaA/DszA monooxygenase family. RutA subfamily.

It catalyses the reaction uracil + FMNH2 + NADH + O2 = (Z)-3-ureidoacrylate + FMN + NAD(+) + H2O + H(+). The enzyme catalyses thymine + FMNH2 + NADH + O2 = (Z)-2-methylureidoacrylate + FMN + NAD(+) + H2O + H(+). Functionally, catalyzes the pyrimidine ring opening between N-3 and C-4 by an unusual flavin hydroperoxide-catalyzed mechanism, adding oxygen atoms in the process to yield ureidoacrylate peracid, that immediately reacts with FMN forming ureidoacrylate and FMN-N(5)-oxide. The FMN-N(5)-oxide reacts spontaneously with NADH to produce FMN. Requires the flavin reductase RutF to regenerate FMN in vivo. This is Pyrimidine monooxygenase RutA from Serratia proteamaculans (strain 568).